The primary structure comprises 151 residues: Ribosome maturation factor RimP (151 aa).

It belongs to the RimP family.

The protein localises to the cytoplasm. Required for maturation of 30S ribosomal subunits. The chain is Ribosome maturation factor RimP from Crocosphaera subtropica (strain ATCC 51142 / BH68) (Cyanothece sp. (strain ATCC 51142)).